A 569-amino-acid polypeptide reads, in one-letter code: RNA demethylase ALKBH10B (569 aa).

Positions 118-151 (QKVAAKKAEDLKQKKTEEEAEEDLKEVVATEEEE) form a coiled coil. Positions 164-190 (ENDVNGDVEDVEDDSPTSDITDSGSHQ) are disordered. The segment covering 167-179 (VNGDVEDVEDDSP) has biased composition (acidic residues). The segment covering 180–189 (TSDITDSGSH) has biased composition (polar residues). H366, E368, and H421 together coordinate Fe cation. R430 contributes to the 2-oxoglutarate binding site. Basic residues predominate over residues 531-545 (KHVKHLPPRAQKKRL). Residues 531–569 (KHVKHLPPRAQKKRLLPLPPAASSSPAGGSTSEPVITVG) form a disordered region. The span at 551–560 (AASSSPAGGS) shows a compositional bias: low complexity.

This sequence belongs to the alkB family. Fe(2+) serves as cofactor.

It catalyses the reaction an N(6)-methyladenosine in mRNA + 2-oxoglutarate + O2 = an adenosine in mRNA + formaldehyde + succinate + CO2. Dioxygenase that demethylates RNA by oxidative demethylation: specifically demethylates N(6)-methyladenosine (m6A) RNA, the most prevalent internal modification of messenger RNA (mRNA) in higher eukaryotes. ALKBH10B-mediated mRNA m6A demethylation stabilizes the mRNA of the key flowering time regulators FT, SPL3 and SPL9, which are involved in the control of floral transition. This Arabidopsis thaliana (Mouse-ear cress) protein is RNA demethylase ALKBH10B.